A 547-amino-acid chain; its full sequence is Chaperonin GroEL (547 aa).

ATP is bound by residues 30–33 (TLGP), Lys-51, 87–91 (DGTTT), Gly-415, and Asp-496. Residues 528-547 (KGGGAPAGGGMPGGMGDMDF) form a disordered region.

The protein belongs to the chaperonin (HSP60) family. In terms of assembly, forms a cylinder of 14 subunits composed of two heptameric rings stacked back-to-back. Interacts with the co-chaperonin GroES.

The protein localises to the cytoplasm. The enzyme catalyses ATP + H2O + a folded polypeptide = ADP + phosphate + an unfolded polypeptide.. Together with its co-chaperonin GroES, plays an essential role in assisting protein folding. The GroEL-GroES system forms a nano-cage that allows encapsulation of the non-native substrate proteins and provides a physical environment optimized to promote and accelerate protein folding. This chain is Chaperonin GroEL, found in Caulobacter vibrioides (strain ATCC 19089 / CIP 103742 / CB 15) (Caulobacter crescentus).